Reading from the N-terminus, the 615-residue chain is Proteasome-associated ATPase (615 aa).

The tract at residues M1–R36 is disordered. A coiled-coil region spans residues S25–Q102. G302 to L307 contacts ATP. The docks into pockets in the proteasome alpha-ring stretch occupies residues Y614 to L615.

Belongs to the AAA ATPase family. In terms of assembly, homohexamer. Assembles into a hexameric ring structure that caps the 20S proteasome core. Strongly interacts with the prokaryotic ubiquitin-like protein Pup through a hydrophobic interface; the interacting region of ARC lies in its N-terminal coiled-coil domain. There is one Pup binding site per ARC hexamer ring. Upon ATP-binding, the C-terminus of ARC interacts with the alpha-rings of the proteasome core, possibly by binding to the intersubunit pockets.

Its pathway is protein degradation; proteasomal Pup-dependent pathway. Its function is as follows. ATPase which is responsible for recognizing, binding, unfolding and translocation of pupylated proteins into the bacterial 20S proteasome core particle. May be essential for opening the gate of the 20S proteasome via an interaction with its C-terminus, thereby allowing substrate entry and access to the site of proteolysis. Thus, the C-termini of the proteasomal ATPase may function like a 'key in a lock' to induce gate opening and therefore regulate proteolysis. The chain is Proteasome-associated ATPase from Mycolicibacterium gilvum (strain PYR-GCK) (Mycobacterium gilvum (strain PYR-GCK)).